The following is a 611-amino-acid chain: ATP-dependent zinc metalloprotease FtsH 1 (611 aa).

Over 1-6 (MNDNNK) the chain is Cytoplasmic. Residues 7 to 27 (IIRSMVLYLLIFIAIYAMVQL) traverse the membrane as a helical segment. Residues 28–107 (YSQSTEPITD…KSEPQVGPPW (80 aa)) are Extracellular-facing. Residues 108-128 (WVQMLPSLFLIVIFIIFWYIF) traverse the membrane as a helical segment. Residue 124–131 (FWYIFMQQ) coordinates ATP. At 129–611 (MQQAQGGGGS…GEDIEGVQFA (483 aa)) the chain is on the cytoplasmic side. His-423 is a Zn(2+) binding site. The active site involves Glu-424. Residues His-427 and Asp-499 each contribute to the Zn(2+) site.

The protein in the central section; belongs to the AAA ATPase family. In the C-terminal section; belongs to the peptidase M41 family. In terms of assembly, homohexamer. The cofactor is Zn(2+).

It is found in the cell membrane. Acts as a processive, ATP-dependent zinc metallopeptidase for both cytoplasmic and membrane proteins. Plays a role in the quality control of integral membrane proteins. The protein is ATP-dependent zinc metalloprotease FtsH 1 of Thermoanaerobacter sp. (strain X514).